The primary structure comprises 155 residues: Small ribosomal subunit protein uS7 (155 aa).

It belongs to the universal ribosomal protein uS7 family. Part of the 30S ribosomal subunit. Contacts proteins S9 and S11.

One of the primary rRNA binding proteins, it binds directly to 16S rRNA where it nucleates assembly of the head domain of the 30S subunit. Is located at the subunit interface close to the decoding center, probably blocks exit of the E-site tRNA. The chain is Small ribosomal subunit protein uS7 from Chlorobium phaeobacteroides (strain DSM 266 / SMG 266 / 2430).